Here is a 461-residue protein sequence, read N- to C-terminus: Serine/threonine-protein kinase VHS1 (461 aa).

The Protein kinase domain occupies Tyr12–Thr337. Residues Ile18–Val26 and Lys41 each bind ATP. Asp185 (proton acceptor) is an active-site residue. Positions Leu384–Asn433 are disordered. Acidic residues predominate over residues Ser390–Asp403. Positions Ser406–Asn433 are enriched in polar residues.

It belongs to the protein kinase superfamily. Ser/Thr protein kinase family.

It is found in the cytoplasm. It carries out the reaction L-seryl-[protein] + ATP = O-phospho-L-seryl-[protein] + ADP + H(+). The enzyme catalyses L-threonyl-[protein] + ATP = O-phospho-L-threonyl-[protein] + ADP + H(+). In terms of biological role, probable serine/threonine protein kinase involved in the G1-S transition. The protein is Serine/threonine-protein kinase VHS1 (VHS1) of Saccharomyces cerevisiae (strain ATCC 204508 / S288c) (Baker's yeast).